A 260-amino-acid polypeptide reads, in one-letter code: Cytochrome c oxidase subunit 2 (260 aa).

Residues 1 to 43 are Mitochondrial intermembrane-facing; that stretch reads MILRLLECRFFTIALCDAAEPWQLGFQDAATPMMQGIIDLHHD. The chain crosses the membrane as a helical span at residues 44 to 64; that stretch reads IFFFLILILVFVLWMLVRALW. Topologically, residues 65–84 are mitochondrial matrix; that stretch reads HFNEQTNPIPQRIVHGTTIE. Residues 85-105 form a helical membrane-spanning segment; the sequence is IIWTIFPSVILLFIAIPSFAL. The Mitochondrial intermembrane segment spans residues 106–260; sequence LYSMDGVLVD…VSNQLILQTN (155 aa). Cu cation contacts are provided by His189, Cys224, Glu226, Cys228, His232, and Met235. Glu226 is a Mg(2+) binding site.

The protein belongs to the cytochrome c oxidase subunit 2 family. As to quaternary structure, component of the cytochrome c oxidase (complex IV, CIV), a multisubunit enzyme composed of a catalytic core of 3 subunits and several supernumerary subunits. The complex exists as a monomer or a dimer and forms supercomplexes (SCs) in the inner mitochondrial membrane with ubiquinol-cytochrome c oxidoreductase (cytochrome b-c1 complex, complex III, CIII). Cu cation serves as cofactor.

It is found in the mitochondrion inner membrane. The catalysed reaction is 4 Fe(II)-[cytochrome c] + O2 + 8 H(+)(in) = 4 Fe(III)-[cytochrome c] + 2 H2O + 4 H(+)(out). Component of the cytochrome c oxidase, the last enzyme in the mitochondrial electron transport chain which drives oxidative phosphorylation. The respiratory chain contains 3 multisubunit complexes succinate dehydrogenase (complex II, CII), ubiquinol-cytochrome c oxidoreductase (cytochrome b-c1 complex, complex III, CIII) and cytochrome c oxidase (complex IV, CIV), that cooperate to transfer electrons derived from NADH and succinate to molecular oxygen, creating an electrochemical gradient over the inner membrane that drives transmembrane transport and the ATP synthase. Cytochrome c oxidase is the component of the respiratory chain that catalyzes the reduction of oxygen to water. Electrons originating from reduced cytochrome c in the intermembrane space (IMS) are transferred via the dinuclear copper A center (CU(A)) of subunit 2 and heme A of subunit 1 to the active site in subunit 1, a binuclear center (BNC) formed by heme A3 and copper B (CU(B)). The BNC reduces molecular oxygen to 2 water molecules using 4 electrons from cytochrome c in the IMS and 4 protons from the mitochondrial matrix. The protein is Cytochrome c oxidase subunit 2 (COX2) of Zea mays (Maize).